A 486-amino-acid polypeptide reads, in one-letter code: Serine/threonine-protein phosphatase 2A 56 kDa regulatory subunit alpha isoform (486 aa).

Over residues 1-18 the composition is skewed to low complexity; the sequence is MSSSSPPAGAASAAISAS. The interval 1–52 is disordered; sequence MSSSSPPAGAASAAISASEKVDGFTRKSVRKAQRQKRSQGSSQFRSQGSQAE. Position 2 is an N-acetylserine (serine 2). Over residues 27–37 the composition is skewed to basic residues; the sequence is KSVRKAQRQKR. Residues 38–51 show a composition bias toward low complexity; that stretch reads SQGSSQFRSQGSQA. Residues serine 41, serine 42, and serine 49 each carry the phosphoserine modification.

This sequence belongs to the phosphatase 2A regulatory subunit B56 family. In terms of assembly, PP2A consists of a common heterodimeric core enzyme, composed of a 36 kDa catalytic subunit (subunit C) and a 65 kDa constant regulatory subunit (PR65 or subunit A), that associates with a variety of regulatory subunits. Proteins that associate with the core dimer include three families of regulatory subunits B (the R2/B/PR55/B55, R3/B''/PR72/PR130/PR59 and R5/B'/B56 families), the 48 kDa variable regulatory subunit, viral proteins, and cell signaling molecules. Interacts with SGO1. In terms of processing, phosphorylated on serine residues. As to expression, widely expressed with the highest expression in heart and skeletal muscle.

It localises to the cytoplasm. It is found in the nucleus. The protein resides in the chromosome. Its subcellular location is the centromere. Functionally, the B regulatory subunit might modulate substrate selectivity and catalytic activity, and might also direct the localization of the catalytic enzyme to a particular subcellular compartment. This Homo sapiens (Human) protein is Serine/threonine-protein phosphatase 2A 56 kDa regulatory subunit alpha isoform (PPP2R5A).